A 245-amino-acid chain; its full sequence is Small ribosomal subunit protein uS2 (245 aa).

This sequence belongs to the universal ribosomal protein uS2 family.

This chain is Small ribosomal subunit protein uS2, found in Pseudomonas putida (strain GB-1).